The following is a 194-amino-acid chain: Crossover junction endodeoxyribonuclease RuvC (194 aa).

Active-site residues include aspartate 8, glutamate 72, and aspartate 144. Mg(2+) is bound by residues aspartate 8, glutamate 72, and aspartate 144.

This sequence belongs to the RuvC family. In terms of assembly, homodimer which binds Holliday junction (HJ) DNA. The HJ becomes 2-fold symmetrical on binding to RuvC with unstacked arms; it has a different conformation from HJ DNA in complex with RuvA. In the full resolvosome a probable DNA-RuvA(4)-RuvB(12)-RuvC(2) complex forms which resolves the HJ. Mg(2+) is required as a cofactor.

Its subcellular location is the cytoplasm. It carries out the reaction Endonucleolytic cleavage at a junction such as a reciprocal single-stranded crossover between two homologous DNA duplexes (Holliday junction).. The RuvA-RuvB-RuvC complex processes Holliday junction (HJ) DNA during genetic recombination and DNA repair. Endonuclease that resolves HJ intermediates. Cleaves cruciform DNA by making single-stranded nicks across the HJ at symmetrical positions within the homologous arms, yielding a 5'-phosphate and a 3'-hydroxyl group; requires a central core of homology in the junction. The consensus cleavage sequence is 5'-(A/T)TT(C/G)-3'. Cleavage occurs on the 3'-side of the TT dinucleotide at the point of strand exchange. HJ branch migration catalyzed by RuvA-RuvB allows RuvC to scan DNA until it finds its consensus sequence, where it cleaves and resolves the cruciform DNA. The sequence is that of Crossover junction endodeoxyribonuclease RuvC from Psychrobacter cryohalolentis (strain ATCC BAA-1226 / DSM 17306 / VKM B-2378 / K5).